The sequence spans 134 residues: Small ribosomal subunit protein uS11 (134 aa).

Belongs to the universal ribosomal protein uS11 family. In terms of assembly, part of the 30S ribosomal subunit. Interacts with proteins S7 and S18. Binds to IF-3.

Located on the platform of the 30S subunit, it bridges several disparate RNA helices of the 16S rRNA. Forms part of the Shine-Dalgarno cleft in the 70S ribosome. This chain is Small ribosomal subunit protein uS11, found in Polaromonas naphthalenivorans (strain CJ2).